A 446-amino-acid chain; its full sequence is Putative diacyglycerol O-acyltransferase Rv3371 (446 aa).

Catalysis depends on His-129, which acts as the Proton acceptor. The disordered stretch occupies residues 425-446 (SRALPSAARRGRPSVPTARARH).

This sequence belongs to the long-chain O-acyltransferase family.

It catalyses the reaction an acyl-CoA + a 1,2-diacyl-sn-glycerol = a triacyl-sn-glycerol + CoA. It carries out the reaction di-(9Z)-octadecenoylglycerol + (9Z)-octadecenoyl-CoA = 1,2,3-tri-(9Z-octadecenoyl)-glycerol + CoA. It functions in the pathway glycerolipid metabolism; triacylglycerol biosynthesis. Functionally, catalyzes the terminal and only committed step in triacylglycerol synthesis by using diacylglycerol and fatty acyl CoA as substrates. Required for storage lipid synthesis. In terms of biological role, upon expression in E.coli functions weakly as a triacylglycerol synthase, making triacylglycerol (TG) from diolein and long-chain fatty acyl-CoA. Has no wax synthase activity to produce wax esters. The chain is Putative diacyglycerol O-acyltransferase Rv3371 from Mycobacterium tuberculosis (strain ATCC 25618 / H37Rv).